Here is a 559-residue protein sequence, read N- to C-terminus: Formate--tetrahydrofolate ligase (559 aa).

68-75 (TPAGEGKS) contacts ATP.

This sequence belongs to the formate--tetrahydrofolate ligase family.

The catalysed reaction is (6S)-5,6,7,8-tetrahydrofolate + formate + ATP = (6R)-10-formyltetrahydrofolate + ADP + phosphate. The protein operates within one-carbon metabolism; tetrahydrofolate interconversion. The protein is Formate--tetrahydrofolate ligase of Lactobacillus gasseri (strain ATCC 33323 / DSM 20243 / BCRC 14619 / CIP 102991 / JCM 1131 / KCTC 3163 / NCIMB 11718 / NCTC 13722 / AM63).